A 368-amino-acid chain; its full sequence is UDP-N-acetylglucosamine--N-acetylmuramyl-(pentapeptide) pyrophosphoryl-undecaprenol N-acetylglucosamine transferase (368 aa).

Residues 14–16, asparagine 125, arginine 168, serine 196, and glutamine 297 contribute to the UDP-N-acetyl-alpha-D-glucosamine site; that span reads TGG.

It belongs to the glycosyltransferase 28 family. MurG subfamily.

The protein resides in the cell inner membrane. It catalyses the reaction di-trans,octa-cis-undecaprenyl diphospho-N-acetyl-alpha-D-muramoyl-L-alanyl-D-glutamyl-meso-2,6-diaminopimeloyl-D-alanyl-D-alanine + UDP-N-acetyl-alpha-D-glucosamine = di-trans,octa-cis-undecaprenyl diphospho-[N-acetyl-alpha-D-glucosaminyl-(1-&gt;4)]-N-acetyl-alpha-D-muramoyl-L-alanyl-D-glutamyl-meso-2,6-diaminopimeloyl-D-alanyl-D-alanine + UDP + H(+). It participates in cell wall biogenesis; peptidoglycan biosynthesis. Its function is as follows. Cell wall formation. Catalyzes the transfer of a GlcNAc subunit on undecaprenyl-pyrophosphoryl-MurNAc-pentapeptide (lipid intermediate I) to form undecaprenyl-pyrophosphoryl-MurNAc-(pentapeptide)GlcNAc (lipid intermediate II). The polypeptide is UDP-N-acetylglucosamine--N-acetylmuramyl-(pentapeptide) pyrophosphoryl-undecaprenol N-acetylglucosamine transferase (Nitrobacter winogradskyi (strain ATCC 25391 / DSM 10237 / CIP 104748 / NCIMB 11846 / Nb-255)).